Here is a 169-residue protein sequence, read N- to C-terminus: Ribosome maturation factor RimM (169 aa).

In terms of domain architecture, PRC barrel spans Pro-92–Leu-167.

This sequence belongs to the RimM family. As to quaternary structure, binds ribosomal protein uS19.

The protein localises to the cytoplasm. An accessory protein needed during the final step in the assembly of 30S ribosomal subunit, possibly for assembly of the head region. Essential for efficient processing of 16S rRNA. May be needed both before and after RbfA during the maturation of 16S rRNA. It has affinity for free ribosomal 30S subunits but not for 70S ribosomes. The protein is Ribosome maturation factor RimM of Caldicellulosiruptor bescii (strain ATCC BAA-1888 / DSM 6725 / KCTC 15123 / Z-1320) (Anaerocellum thermophilum).